Consider the following 57-residue polypeptide: uncharacterized protein (57 aa).

Residues 21–37 (GTYTLVVAFVLAFLVYS) form a helical membrane-spanning segment.

The protein localises to the host membrane. This is an uncharacterized protein from Human herpesvirus 6B (strain Z29) (HHV-6 variant B).